The primary structure comprises 101 residues: Floral defensin-like protein 2 (101 aa).

A signal peptide spans 1–25 (MARSICFFAVAILALMLFAAYETEA). Disulfide bonds link Cys-28/Cys-74, Cys-32/Cys-48, Cys-39/Cys-61, Cys-45/Cys-68, and Cys-49/Cys-70. The propeptide at 75-101 (ATEEATATLANEVKTMAEALVEEDMME) is removed in mature form.

It belongs to the DEFL family. Post-translationally, when compared to other plant defensins, the petunia defensins have an additional fifth disulfide bond. Petals.

It localises to the secreted. It is found in the vacuole. Functionally, plant defense peptide with antifungal activity against F.oxysporum and B.cinerea. This chain is Floral defensin-like protein 2 (D2), found in Petunia hybrida (Petunia).